We begin with the raw amino-acid sequence, 392 residues long: Meiotically up-regulated gene 11 protein (392 aa).

Its subcellular location is the cytoplasm. The protein resides in the nucleus. Functionally, has a role in meiosis. The sequence is that of Meiotically up-regulated gene 11 protein (mug11) from Schizosaccharomyces pombe (strain 972 / ATCC 24843) (Fission yeast).